The chain runs to 428 residues: Adenylosuccinate synthetase (428 aa).

GTP-binding positions include 12–18 (GDEGKGK) and 40–42 (GHT). The active-site Proton acceptor is the D13. Mg(2+) contacts are provided by D13 and G40. IMP is bound by residues 13-16 (DEGK), 38-41 (NAGH), T128, R142, Q223, T238, and R302. Residue H41 is the Proton donor of the active site. 298-304 (TTTGRPR) is a substrate binding site. GTP contacts are provided by residues R304, 330 to 332 (KLD), and 412 to 414 (SVG).

Belongs to the adenylosuccinate synthetase family. In terms of assembly, homodimer. It depends on Mg(2+) as a cofactor.

It is found in the cytoplasm. The enzyme catalyses IMP + L-aspartate + GTP = N(6)-(1,2-dicarboxyethyl)-AMP + GDP + phosphate + 2 H(+). The protein operates within purine metabolism; AMP biosynthesis via de novo pathway; AMP from IMP: step 1/2. Its function is as follows. Plays an important role in the de novo pathway of purine nucleotide biosynthesis. Catalyzes the first committed step in the biosynthesis of AMP from IMP. The protein is Adenylosuccinate synthetase of Brevibacillus brevis (strain 47 / JCM 6285 / NBRC 100599).